The following is a 296-amino-acid chain: Adrenocorticotropic hormone receptor (296 aa).

The Extracellular portion of the chain corresponds to 1-23 (MKHIINSYEHTNDTARNNSDCPD). Asn-12 and Asn-17 each carry an N-linked (GlcNAc...) asparagine glycan. Intrachain disulfides connect Cys-21-Cys-253 and Cys-245-Cys-251. A helical membrane pass occupies residues 24 to 49 (VVLPEEIFFTISVIGILENLIVLLAV). Topologically, residues 50-58 (IKNKNLQSP) are cytoplasmic. Residues 59–79 (MYFFICSLAISDMLGSLYKIL) traverse the membrane as a helical segment. Residues 80–104 (ENILIMFRNMGYLKPRGSFESTADD) lie on the Extracellular side of the membrane. Residues 105–126 (IIDCMFILSLLGSIFSLSVIAA) form a helical membrane-spanning segment. Residues 127 to 147 (DRYITIFHALQYHSIVTMRRT) lie on the Cytoplasmic side of the membrane. A helical transmembrane segment spans residues 148 to 168 (IITLTIIWMFCTGSGITMVIF). Residues 169–180 (SHHIPTVLTFTS) lie on the Extracellular side of the membrane. Residues 181 to 199 (LFPLMLVFILCLYIHMFLL) traverse the membrane as a helical segment. The Cytoplasmic segment spans residues 200–217 (ARSHARKISTLPRTNMKG). Residues 218-244 (AMTLTILLGVFIFCWAPFVLHVLLMTF) form a helical membrane-spanning segment. Residues 245–256 (CPNNPYCVCYMS) lie on the Extracellular side of the membrane. The helical transmembrane segment at 257–278 (LFQVNGMLIMCNAVIDPFIYAF) threads the bilayer. The Cytoplasmic segment spans residues 279-296 (RSPELRDAFKRMLFCNRY). Residue Cys-293 is the site of S-palmitoyl cysteine attachment.

This sequence belongs to the G-protein coupled receptor 1 family. Homodimer. Interacts with corticotropin (ACTH). Interacts with MRAP; this interaction targets MC2R to the plasma membrane. Interacts with MRAP2; competing with MRAP for binding to MC2R and impairing the binding of corticotropin (ACTH). Ubiquitinated by MGRN1 that may be involved in post-endocytic trafficking and/or degradation of internalized receptor.

It is found in the cell membrane. Functionally, hormone receptor primarily expressed in adrenal cortex that plays a key role in regulating adrenocortical function. Upon corticotropin (ACTH) binding, facilitates the release of adrenal glucocorticoids, including cortisol and corticosterone. In addition, MC2R is required for fetal and neonatal adrenal gland development. Mechanistically, activates adenylate cyclase (cAMP), the MAPK cascade as well as the cAMP-dependent protein kinase A pathway leading to steroidogenic factor 1/NR5A1-mediated transcriptional activation. The protein is Adrenocorticotropic hormone receptor (Mc2r) of Mus musculus (Mouse).